The chain runs to 151 residues: D-aminoacyl-tRNA deacylase (151 aa).

The Gly-cisPro motif, important for rejection of L-amino acids motif lies at 138–139 (GP).

Belongs to the DTD family. Homodimer.

The protein resides in the cytoplasm. It catalyses the reaction glycyl-tRNA(Ala) + H2O = tRNA(Ala) + glycine + H(+). It carries out the reaction a D-aminoacyl-tRNA + H2O = a tRNA + a D-alpha-amino acid + H(+). An aminoacyl-tRNA editing enzyme that deacylates mischarged D-aminoacyl-tRNAs. Also deacylates mischarged glycyl-tRNA(Ala), protecting cells against glycine mischarging by AlaRS. Acts via tRNA-based rather than protein-based catalysis; rejects L-amino acids rather than detecting D-amino acids in the active site. By recycling D-aminoacyl-tRNA to D-amino acids and free tRNA molecules, this enzyme counteracts the toxicity associated with the formation of D-aminoacyl-tRNA entities in vivo and helps enforce protein L-homochirality. This chain is D-aminoacyl-tRNA deacylase, found in Picosynechococcus sp. (strain ATCC 27264 / PCC 7002 / PR-6) (Agmenellum quadruplicatum).